The chain runs to 147 residues: Small ribosomal subunit protein uS12 (147 aa).

The protein belongs to the universal ribosomal protein uS12 family. In terms of assembly, part of the 30S ribosomal subunit.

With S4 and S5 plays an important role in translational accuracy. Located at the interface of the 30S and 50S subunits. This chain is Small ribosomal subunit protein uS12, found in Pyrococcus horikoshii (strain ATCC 700860 / DSM 12428 / JCM 9974 / NBRC 100139 / OT-3).